The sequence spans 404 residues: Cysteine desulfurase IscS (404 aa).

Pyridoxal 5'-phosphate-binding positions include 75–76, Asn155, Gln183, and 203–205; these read AT and SAH. An N6-(pyridoxal phosphate)lysine modification is found at Lys206. Position 243 (Thr243) interacts with pyridoxal 5'-phosphate. Cys328 serves as the catalytic Cysteine persulfide intermediate. Cys328 lines the [2Fe-2S] cluster pocket.

The protein belongs to the class-V pyridoxal-phosphate-dependent aminotransferase family. NifS/IscS subfamily. Homodimer. Forms a heterotetramer with IscU, interacts with other sulfur acceptors. Requires pyridoxal 5'-phosphate as cofactor.

The protein resides in the cytoplasm. It carries out the reaction (sulfur carrier)-H + L-cysteine = (sulfur carrier)-SH + L-alanine. The protein operates within cofactor biosynthesis; iron-sulfur cluster biosynthesis. Its function is as follows. Master enzyme that delivers sulfur to a number of partners involved in Fe-S cluster assembly, tRNA modification or cofactor biosynthesis. Catalyzes the removal of elemental sulfur atoms from cysteine to produce alanine. Functions as a sulfur delivery protein for Fe-S cluster synthesis onto IscU, an Fe-S scaffold assembly protein, as well as other S acceptor proteins. This Pseudomonas aeruginosa (strain LESB58) protein is Cysteine desulfurase IscS.